The sequence spans 92 residues: Small ribosomal subunit protein uS19 (92 aa).

The protein belongs to the universal ribosomal protein uS19 family.

Protein S19 forms a complex with S13 that binds strongly to the 16S ribosomal RNA. The sequence is that of Small ribosomal subunit protein uS19 from Shewanella halifaxensis (strain HAW-EB4).